A 431-amino-acid polypeptide reads, in one-letter code: Tol-Pal system protein TolB (431 aa).

An N-terminal signal peptide occupies residues 1-18 (MKALLLSLLLLLPVVALA). The interval 410 to 431 (LPLRTEKGTYQTPDWSPLPQAQ) is disordered.

Belongs to the TolB family. The Tol-Pal system is composed of five core proteins: the inner membrane proteins TolA, TolQ and TolR, the periplasmic protein TolB and the outer membrane protein Pal. They form a network linking the inner and outer membranes and the peptidoglycan layer.

The protein resides in the periplasm. In terms of biological role, part of the Tol-Pal system, which plays a role in outer membrane invagination during cell division and is important for maintaining outer membrane integrity. This chain is Tol-Pal system protein TolB, found in Myxococcus xanthus.